The sequence spans 431 residues: Adenylosuccinate lyase (431 aa).

N(6)-(1,2-dicarboxyethyl)-AMP-binding positions include 4-5 (RY), 67-69 (NHD), and 93-94 (TS). His141 serves as the catalytic Proton donor/acceptor. Position 212 (Gln212) interacts with N(6)-(1,2-dicarboxyethyl)-AMP. Ser262 acts as the Proton donor/acceptor in catalysis. N(6)-(1,2-dicarboxyethyl)-AMP-binding positions include Ser263, 268–270 (KKN), and 307–311 (SVERY).

Belongs to the lyase 1 family. Adenylosuccinate lyase subfamily. Homotetramer. Residues from neighboring subunits contribute catalytic and substrate-binding residues to each active site.

The enzyme catalyses N(6)-(1,2-dicarboxyethyl)-AMP = fumarate + AMP. The catalysed reaction is (2S)-2-[5-amino-1-(5-phospho-beta-D-ribosyl)imidazole-4-carboxamido]succinate = 5-amino-1-(5-phospho-beta-D-ribosyl)imidazole-4-carboxamide + fumarate. Its pathway is purine metabolism; AMP biosynthesis via de novo pathway; AMP from IMP: step 2/2. It participates in purine metabolism; IMP biosynthesis via de novo pathway; 5-amino-1-(5-phospho-D-ribosyl)imidazole-4-carboxamide from 5-amino-1-(5-phospho-D-ribosyl)imidazole-4-carboxylate: step 2/2. Catalyzes two reactions in de novo purine nucleotide biosynthesis. Catalyzes the breakdown of 5-aminoimidazole- (N-succinylocarboxamide) ribotide (SAICAR or 2-[5-amino-1-(5-phospho-beta-D-ribosyl)imidazole-4-carboxamido]succinate) to 5-aminoimidazole-4-carboxamide ribotide (AICAR or 5-amino-1-(5-phospho-beta-D-ribosyl)imidazole-4-carboxamide) and fumarate, and of adenylosuccinate (ADS or N(6)-(1,2-dicarboxyethyl)-AMP) to adenosine monophosphate (AMP) and fumarate. The sequence is that of Adenylosuccinate lyase (purB) from Thermotoga maritima (strain ATCC 43589 / DSM 3109 / JCM 10099 / NBRC 100826 / MSB8).